A 607-amino-acid chain; its full sequence is Monocarboxylate transporter 7 (607 aa).

Residues 1–84 form a disordered region; the sequence is MRASGQGPQR…PAETGCSRSR (84 aa). Over 1–105 the chain is Cytoplasmic; sequence MRASGQGPQR…ANVYTQVPDG (105 aa). The chain crosses the membrane as a helical span at residues 106 to 126; sequence GWGWAVAVSFFFVEVFTYGII. Residues 127 to 146 are Extracellular-facing; the sequence is KSFGVFFNDLMDSFDESNSK. Residues 147–167 traverse the membrane as a helical segment; that stretch reads ISWIISICVFVLTFTAPLSTV. Over 168 to 175 the chain is Cytoplasmic; the sequence is LSNRFGHR. A helical membrane pass occupies residues 176–196; sequence LVVMAGGLLISLGMITASFSQ. Residues 197-202 are Extracellular-facing; the sequence is RVYHMY. The chain crosses the membrane as a helical span at residues 203-223; that stretch reads ISIGVISGLGYCFSFLPTVTI. Topologically, residues 224-233 are cytoplasmic; it reads LSQYFDKRRS. A helical transmembrane segment spans residues 234-254; sequence VVTAVASTGECFAVFAFAPAI. Topologically, residues 255-268 are extracellular; it reads TALKEHIGWRYSLL. Residues 269-289 traverse the membrane as a helical segment; the sequence is FVGLLQLNIMVCGALLRPIII. The Cytoplasmic portion of the chain corresponds to 290-383; the sequence is QGPGQSPKAV…KEKSFICYAL (94 aa). Phosphoserine occurs at positions 319, 322, 325, and 332. The helical transmembrane segment at 384-404 threads the bilayer; it reads FGLFATLGFFAPSLYIIPLGI. The Extracellular segment spans residues 405 to 414; that stretch reads SLGIDPDRAA. Residues 415–435 traverse the membrane as a helical segment; it reads FLLSTMAIAEVFGRIGAGFVL. The Cytoplasmic segment spans residues 436–442; the sequence is NREPIRK. Residues 443-463 form a helical membrane-spanning segment; sequence IYIELICVILLTASLFAFTFA. Over 464 to 465 the chain is Extracellular; sequence TE. The helical transmembrane segment at 466 to 486 threads the bilayer; the sequence is FWGLMLCSVFFGSMVGTIGGT. Residues 487 to 507 are Cytoplasmic-facing; that stretch reads HIPMLAEDDVVGIEKMSSAAG. The chain crosses the membrane as a helical span at residues 508-528; it reads VYVFIQSISGLAGPPLAGLLV. At 529–536 the chain is on the extracellular side; the sequence is DQSKIYSR. The helical transmembrane segment at 537 to 557 threads the bilayer; it reads AFYSCAAGMCLAAVCLALVRP. Over 558 to 607 the chain is Cytoplasmic; sequence CKKGLCQNSHSGENQTDRQRGKALQDIPEDFLEMDLGKCEHRAHMKMDPV.

It belongs to the major facilitator superfamily. Monocarboxylate porter (TC 2.A.1.13) family. Forms functional complexes with BSG/CD147 or EMB/GP70 ancillary proteins.

The protein localises to the basolateral cell membrane. The enzyme catalyses taurine(out) = taurine(in). Monocarboxylate transporter selective for taurine. May associate with BSG/CD147 or EMB/GP70 ancillary proteins to mediate facilitative efflux or influx of taurine across the plasma membrane. The transport is pH- and sodium-independent. Rather low-affinity, is likely effective for taurine transport in tissues where taurine is present at high concentrations. The protein is Monocarboxylate transporter 7 of Mus musculus (Mouse).